Here is a 474-residue protein sequence, read N- to C-terminus: Sulfide dehydrogenase subunit alpha (474 aa).

Positions M1–P2 are excised as a propeptide. Positions 42, 45, 52, and 56 each coordinate [4Fe-4S] cluster. Residues C101, C107, and C111 each contribute to the [3Fe-4S] cluster site.

As to quaternary structure, heterodimer of alpha and beta subunits. FAD is required as a cofactor. It depends on [3Fe-4S] cluster as a cofactor. The cofactor is [4Fe-4S] cluster.

The protein resides in the cytoplasm. It catalyses the reaction n sulfur + hydrogen sulfide + NADP(+) = (n+1) sulfur + NADPH. The enzyme catalyses 2 reduced [2Fe-2S]-[ferredoxin] + NADP(+) + H(+) = 2 oxidized [2Fe-2S]-[ferredoxin] + NADPH. In terms of biological role, a bifunctional enzyme that catalyzes the reduction of elemental sulfur or polysulfide to hydrogen sulfide with NADPH as electron donor. Also functions as a reduced ferredoxin:NADP oxidoreductase with a very high affinity for reduced ferredoxin. Exhibits a broad specificity for various physiological and non-physiological substrates with varied reduction potentials such as methyl viologen, benzyl viologen, FAD, FMN, methylene blue, 2,6-dichlorophenolindophenol (DCIP), cytochrome C and ferricyanide with highest preference for benzyl viologen. Does not reduce fumarate, succinate, nitrate, nitrite, sulfate, sulfite or protons. Does not possess any hydrogenase activity or NADPH-dependent glutamate synthase activity. This is Sulfide dehydrogenase subunit alpha from Pyrococcus furiosus (strain ATCC 43587 / DSM 3638 / JCM 8422 / Vc1).